The chain runs to 432 residues: Probable exopolygalacturonase X (432 aa).

The first 23 residues, 1 to 23, serve as a signal peptide directing secretion; it reads MKFSYSFVQVVSLLLSLSPSVEG. N-linked (GlcNAc...) asparagine glycosylation is found at asparagine 113, asparagine 129, and asparagine 199. One copy of the PbH1 1 repeat lies at 231–252; that stretch reads SDNIVIQNSVINNGDDCVSFKP. Aspartate 245 serves as the catalytic Proton donor. Cysteine 247 and cysteine 264 are oxidised to a cystine. N-linked (GlcNAc...) asparagine glycans are attached at residues asparagine 253 and asparagine 265. PbH1 repeat units lie at residues 254-274, 285-306, and 327-348; these read STNI…SVGS, VQNV…RIKV, and VKNI…EVTQ. The active site involves histidine 268. Asparagine 292, asparagine 297, asparagine 329, asparagine 354, and asparagine 364 each carry an N-linked (GlcNAc...) asparagine glycan. The stretch at 362–394 is one PbH1 5 repeat; that stretch reads PSNLTISDIHFKNFRGTTSGKRDPDVGTIVCSS. Cysteine 392 and cysteine 398 form a disulfide bridge.

Belongs to the glycosyl hydrolase 28 family.

Its subcellular location is the secreted. It catalyses the reaction [(1-&gt;4)-alpha-D-galacturonosyl](n) + H2O = alpha-D-galacturonate + [(1-&gt;4)-alpha-D-galacturonosyl](n-1). Its function is as follows. Specific in hydrolyzing the terminal glycosidic bond of polygalacturonic acid and oligogalacturonates. In Neosartorya fischeri (strain ATCC 1020 / DSM 3700 / CBS 544.65 / FGSC A1164 / JCM 1740 / NRRL 181 / WB 181) (Aspergillus fischerianus), this protein is Probable exopolygalacturonase X (pgaX).